The sequence spans 228 residues: MDNNFKIKDLPKNERPQERLIRYGAEVLSNSELLAVILRTGTKNQNIMMLASSLIKETGGLDQLFNQSIEELTKIKGIGVTKAVQILALSELSKRFKTYKSGNEYKINTPLDVSNLVMEDMKYLKQEKLKILILNTKNIVTYIRDVFIGTLNSSIVHPREIFCEAIKKNGASIIICHNHPSGDPTPSKEDINITLRLKECGKLIGIDLLDHIIIGENKYVSMKEKGTI.

Residues 106 to 228 (KINTPLDVSN…YVSMKEKGTI (123 aa)) enclose the MPN domain. Zn(2+) is bound by residues H177, H179, and D190. The short motif at 177 to 190 (HNHPSGDPTPSKED) is the JAMM motif element.

The protein belongs to the UPF0758 family.

The chain is UPF0758 protein CLD_1541 from Clostridium botulinum (strain Okra / Type B1).